The following is a 501-amino-acid chain: Glycerol kinase (501 aa).

Thr-17 is an ADP binding site. ATP-binding residues include Thr-17, Thr-18, and Ser-19. Thr-17 is a sn-glycerol 3-phosphate binding site. Residue Arg-21 coordinates ADP. Sn-glycerol 3-phosphate contacts are provided by Arg-87, Glu-88, Tyr-139, and Asp-243. 5 residues coordinate glycerol: Arg-87, Glu-88, Tyr-139, Asp-243, and Gln-244. Residues Thr-265 and Gly-308 each coordinate ADP. 4 residues coordinate ATP: Thr-265, Gly-308, Gln-312, and Gly-409. ADP-binding residues include Gly-409 and Asn-413.

The protein belongs to the FGGY kinase family.

It carries out the reaction glycerol + ATP = sn-glycerol 3-phosphate + ADP + H(+). It functions in the pathway polyol metabolism; glycerol degradation via glycerol kinase pathway; sn-glycerol 3-phosphate from glycerol: step 1/1. Inhibited by fructose 1,6-bisphosphate (FBP). In terms of biological role, key enzyme in the regulation of glycerol uptake and metabolism. Catalyzes the phosphorylation of glycerol to yield sn-glycerol 3-phosphate. This Pseudomonas syringae pv. tomato (strain ATCC BAA-871 / DC3000) protein is Glycerol kinase.